A 157-amino-acid polypeptide reads, in one-letter code: 2-C-methyl-D-erythritol 2,4-cyclodiphosphate synthase (157 aa).

A divalent metal cation is bound by residues aspartate 9 and histidine 11. 4-CDP-2-C-methyl-D-erythritol 2-phosphate is bound by residues 9-11 and 35-36; these read DVH and HS. Histidine 43 is a binding site for a divalent metal cation. 4-CDP-2-C-methyl-D-erythritol 2-phosphate contacts are provided by residues 57–59, 62–66, 101–107, 133–136, phenylalanine 140, and arginine 143; these read DIG, FPDTD, AEKPKMA, and TTTE.

Belongs to the IspF family. As to quaternary structure, homotrimer. A divalent metal cation serves as cofactor.

It carries out the reaction 4-CDP-2-C-methyl-D-erythritol 2-phosphate = 2-C-methyl-D-erythritol 2,4-cyclic diphosphate + CMP. Its pathway is isoprenoid biosynthesis; isopentenyl diphosphate biosynthesis via DXP pathway; isopentenyl diphosphate from 1-deoxy-D-xylulose 5-phosphate: step 4/6. Involved in the biosynthesis of isopentenyl diphosphate (IPP) and dimethylallyl diphosphate (DMAPP), two major building blocks of isoprenoid compounds. Catalyzes the conversion of 4-diphosphocytidyl-2-C-methyl-D-erythritol 2-phosphate (CDP-ME2P) to 2-C-methyl-D-erythritol 2,4-cyclodiphosphate (ME-CPP) with a corresponding release of cytidine 5-monophosphate (CMP). This is 2-C-methyl-D-erythritol 2,4-cyclodiphosphate synthase from Listeria innocua serovar 6a (strain ATCC BAA-680 / CLIP 11262).